The following is a 236-amino-acid chain: Phosphoribosylaminoimidazole-succinocarboxamide synthase (236 aa).

The protein belongs to the SAICAR synthetase family.

The enzyme catalyses 5-amino-1-(5-phospho-D-ribosyl)imidazole-4-carboxylate + L-aspartate + ATP = (2S)-2-[5-amino-1-(5-phospho-beta-D-ribosyl)imidazole-4-carboxamido]succinate + ADP + phosphate + 2 H(+). Its pathway is purine metabolism; IMP biosynthesis via de novo pathway; 5-amino-1-(5-phospho-D-ribosyl)imidazole-4-carboxamide from 5-amino-1-(5-phospho-D-ribosyl)imidazole-4-carboxylate: step 1/2. This Cellvibrio japonicus (strain Ueda107) (Pseudomonas fluorescens subsp. cellulosa) protein is Phosphoribosylaminoimidazole-succinocarboxamide synthase.